Here is a 200-residue protein sequence, read N- to C-terminus: Nucleoside triphosphate pyrophosphatase (200 aa).

Catalysis depends on Asp-79, which acts as the Proton acceptor.

Belongs to the Maf family. The cofactor is a divalent metal cation.

It is found in the cytoplasm. The enzyme catalyses a ribonucleoside 5'-triphosphate + H2O = a ribonucleoside 5'-phosphate + diphosphate + H(+). It carries out the reaction a 2'-deoxyribonucleoside 5'-triphosphate + H2O = a 2'-deoxyribonucleoside 5'-phosphate + diphosphate + H(+). Its function is as follows. Nucleoside triphosphate pyrophosphatase. May have a dual role in cell division arrest and in preventing the incorporation of modified nucleotides into cellular nucleic acids. The sequence is that of Nucleoside triphosphate pyrophosphatase from Legionella pneumophila (strain Lens).